The sequence spans 175 residues: Endoribonuclease YbeY (175 aa).

Zn(2+)-binding residues include histidine 129, histidine 133, and histidine 139.

Belongs to the endoribonuclease YbeY family. Requires Zn(2+) as cofactor.

Its subcellular location is the cytoplasm. Functionally, single strand-specific metallo-endoribonuclease involved in late-stage 70S ribosome quality control and in maturation of the 3' terminus of the 16S rRNA. The protein is Endoribonuclease YbeY of Lactobacillus johnsonii (strain CNCM I-12250 / La1 / NCC 533).